A 400-amino-acid polypeptide reads, in one-letter code: Lysophospholipid transporter LplT (400 aa).

The next 12 membrane-spanning stretches (helical) occupy residues 19-39 (VIVA…ATLA), 53-73 (VLQM…GQIA), 91-111 (AGAA…LVGI), 139-159 (LMEA…GVLA), 164-184 (IAAL…NLFI), 195-213 (SWRL…VVLW), 227-247 (LFWG…PVAL), 257-277 (YLNA…AKLV), 281-301 (TVSR…IFSL), 304-324 (ALLP…FFVV), 352-372 (NSAM…GVPA), and 373-393 (VAIG…LWIW).

This sequence belongs to the major facilitator superfamily. LplT (TC 2.A.1.42) family.

Its subcellular location is the cell inner membrane. Functionally, catalyzes the facilitated diffusion of 2-acyl-glycero-3-phosphoethanolamine (2-acyl-GPE) into the cell. The sequence is that of Lysophospholipid transporter LplT from Salmonella schwarzengrund (strain CVM19633).